A 315-amino-acid polypeptide reads, in one-letter code: Olfactory receptor 56A3 (315 aa).

Topologically, residues methionine 1 to histidine 29 are extracellular. The N-linked (GlcNAc...) asparagine glycan is linked to asparagine 6. A helical membrane pass occupies residues tryptophan 30 to leucine 50. The Cytoplasmic segment spans residues methionine 51 to serine 58. A helical transmembrane segment spans residues leucine 59–leucine 79. The Extracellular segment spans residues threonine 80 to leucine 103. Cysteine 101 and cysteine 193 are joined by a disulfide. A helical transmembrane segment spans residues glutamine 104 to tyrosine 124. The Cytoplasmic segment spans residues aspartate 125–histidine 143. Residues phenylalanine 144 to proline 164 traverse the membrane as a helical segment. Topologically, residues isoleucine 165 to histidine 200 are extracellular. A glycan (N-linked (GlcNAc...) asparagine) is linked at asparagine 185. Residues leucine 201 to serine 221 form a helical membrane-spanning segment. Over tyrosine 222–alanine 241 the chain is Cytoplasmic. The chain crosses the membrane as a helical span at residues leucine 242–phenylalanine 262. Residues valine 263–proline 277 lie on the Extracellular side of the membrane. A helical membrane pass occupies residues valine 278–valine 298. Residues arginine 299–cysteine 315 lie on the Cytoplasmic side of the membrane.

It belongs to the G-protein coupled receptor 1 family.

The protein localises to the cell membrane. In terms of biological role, odorant receptor. The chain is Olfactory receptor 56A3 (OR56A3) from Homo sapiens (Human).